Reading from the N-terminus, the 415-residue chain is Serine hydroxymethyltransferase (415 aa).

(6S)-5,6,7,8-tetrahydrofolate-binding positions include leucine 119 and 123–125 (GHL). At lysine 228 the chain carries N6-(pyridoxal phosphate)lysine. 353–355 (SAF) is a binding site for (6S)-5,6,7,8-tetrahydrofolate.

Belongs to the SHMT family. As to quaternary structure, homodimer. Requires pyridoxal 5'-phosphate as cofactor.

Its subcellular location is the cytoplasm. It catalyses the reaction (6R)-5,10-methylene-5,6,7,8-tetrahydrofolate + glycine + H2O = (6S)-5,6,7,8-tetrahydrofolate + L-serine. It participates in one-carbon metabolism; tetrahydrofolate interconversion. Its pathway is amino-acid biosynthesis; glycine biosynthesis; glycine from L-serine: step 1/1. Catalyzes the reversible interconversion of serine and glycine with tetrahydrofolate (THF) serving as the one-carbon carrier. Also exhibits THF-independent aldolase activity toward beta-hydroxyamino acids, producing glycine and aldehydes, via a retro-aldol mechanism. The protein is Serine hydroxymethyltransferase of Haloarcula marismortui (strain ATCC 43049 / DSM 3752 / JCM 8966 / VKM B-1809) (Halobacterium marismortui).